Here is a 546-residue protein sequence, read N- to C-terminus: 2-isopropylmalate synthase (546 aa).

Residues 5-274 (ITIFDTTLRD…TADVHTEHLT (270 aa)) enclose the Pyruvate carboxyltransferase domain. Residues D14, H209, H211, and N245 each coordinate Mn(2+). Positions 415–546 (RLDQFSVHLS…QNGIMHTYGE (132 aa)) are regulatory domain.

This sequence belongs to the alpha-IPM synthase/homocitrate synthase family. LeuA type 1 subfamily. Homodimer. The cofactor is Mn(2+).

The protein localises to the cytoplasm. The enzyme catalyses 3-methyl-2-oxobutanoate + acetyl-CoA + H2O = (2S)-2-isopropylmalate + CoA + H(+). Its pathway is amino-acid biosynthesis; L-leucine biosynthesis; L-leucine from 3-methyl-2-oxobutanoate: step 1/4. Its function is as follows. Catalyzes the condensation of the acetyl group of acetyl-CoA with 3-methyl-2-oxobutanoate (2-ketoisovalerate) to form 3-carboxy-3-hydroxy-4-methylpentanoate (2-isopropylmalate). The polypeptide is 2-isopropylmalate synthase (Salinibacter ruber (strain M8)).